A 448-amino-acid polypeptide reads, in one-letter code: Chromosomal replication initiator protein DnaA (448 aa).

The segment at 1–72 (MPDLQELWNY…VEGAYEFAEI (72 aa)) is domain I, interacts with DnaA modulators. A domain II region spans residues 72-110 (IELTPIFVLPGESDNLTPLEPEEEHVLTKAETPTFLRET). A domain III, AAA+ region region spans residues 111-327 (HLNSKYTFDT…GALVRVQAYA (217 aa)). ATP-binding residues include Gly-155, Gly-157, Lys-158, and Thr-159. Residues 328-448 (TMQNAEITTS…ILDLKNTMKS (121 aa)) form a domain IV, binds dsDNA region.

Belongs to the DnaA family. In terms of assembly, oligomerizes as a right-handed, spiral filament on DNA at oriC.

It is found in the cytoplasm. Functionally, plays an essential role in the initiation and regulation of chromosomal replication. ATP-DnaA binds to the origin of replication (oriC) to initiate formation of the DNA replication initiation complex once per cell cycle. Binds the DnaA box (a 9 base pair repeat at the origin) and separates the double-stranded (ds)DNA. Forms a right-handed helical filament on oriC DNA; dsDNA binds to the exterior of the filament while single-stranded (ss)DNA is stabiized in the filament's interior. The ATP-DnaA-oriC complex binds and stabilizes one strand of the AT-rich DNA unwinding element (DUE), permitting loading of DNA polymerase. After initiation quickly degrades to an ADP-DnaA complex that is not apt for DNA replication. Binds acidic phospholipids. This is Chromosomal replication initiator protein DnaA from Latilactobacillus sakei subsp. sakei (strain 23K) (Lactobacillus sakei subsp. sakei).